We begin with the raw amino-acid sequence, 438 residues long: SPbeta prophage-derived uncharacterized protein YopA (438 aa).

Residues 391–411 (LHVLYLGVWYLELLTLGILGY) form a helical membrane-spanning segment.

The protein localises to the cell membrane. The polypeptide is SPbeta prophage-derived uncharacterized protein YopA (yopA) (Bacillus subtilis (strain 168)).